Consider the following 232-residue polypeptide: Clarin-2 (232 aa).

The next 4 membrane-spanning stretches (helical) occupy residues 8–28 (VWYG…IVAL), 101–121 (ILLL…FAIL), 139–159 (LWNV…MAAV), and 188–208 (SFWI…VVAI).

Belongs to the clarin family. Detected in inner ear, particularly in hair bundles of auditory hair cells and is enriched in apical stereocilia. Detected in eye, but not in brain or muscle.

It is found in the cell projection. The protein localises to the stereocilium membrane. Its function is as follows. Plays a key role to hearing function. Required for normal organization and maintenance of the stereocilia bundle and for mechano-electrical transduction. This Mus musculus (Mouse) protein is Clarin-2.